Consider the following 944-residue polypeptide: Putative alpha,alpha-trehalose-phosphate synthase [UDP-forming] 106 kDa subunit (944 aa).

A compositionally biased stretch (polar residues) spans 73–84 (TNAQSNIATPSP). Disordered regions lie at residues 73-113 (TNAQ…NSLS) and 129-166 (SKNDGTNLSLPPSRHQSPPPSSVLASQRHHRRHDSELE). Residues 101 to 113 (PSSDSPSLENSLS) show a composition bias toward low complexity. Residues Ser141, Ser145, Ser149, Ser150, Ser163, and Ser177 each carry the phosphoserine modification. Residues 173 to 652 (SRSLSFSMNG…AVTFQSLIKE (480 aa)) form a glycosyltransferase region. Position 189 is a phosphothreonine (Thr189).

In the N-terminal section; belongs to the glycosyltransferase 20 family.

It catalyses the reaction D-glucose 6-phosphate + UDP-alpha-D-glucose = alpha,alpha-trehalose 6-phosphate + UDP + H(+). The protein is Putative alpha,alpha-trehalose-phosphate synthase [UDP-forming] 106 kDa subunit of Schizosaccharomyces pombe (strain 972 / ATCC 24843) (Fission yeast).